Reading from the N-terminus, the 501-residue chain is Glucose-6-phosphate isomerase (501 aa).

A disordered region spans residues 78–101 (GIANPTENRAAEHSAERGDGAPES). Over residues 86–97 (RAAEHSAERGDG) the composition is skewed to basic and acidic residues. Glu-333 (proton donor) is an active-site residue. Catalysis depends on residues His-364 and Lys-474.

Belongs to the GPI family.

The protein localises to the cytoplasm. It carries out the reaction alpha-D-glucose 6-phosphate = beta-D-fructose 6-phosphate. It functions in the pathway carbohydrate biosynthesis; gluconeogenesis. It participates in carbohydrate degradation; glycolysis; D-glyceraldehyde 3-phosphate and glycerone phosphate from D-glucose: step 2/4. Catalyzes the reversible isomerization of glucose-6-phosphate to fructose-6-phosphate. In Sphingopyxis alaskensis (strain DSM 13593 / LMG 18877 / RB2256) (Sphingomonas alaskensis), this protein is Glucose-6-phosphate isomerase.